A 297-amino-acid polypeptide reads, in one-letter code: Lipoyl synthase (297 aa).

Positions 37, 42, 48, 63, 67, 70, and 276 each coordinate [4Fe-4S] cluster. One can recognise a Radical SAM core domain in the interval 49-265; sequence WSRKHATVMI…ERIAKTKGFL (217 aa).

It belongs to the radical SAM superfamily. Lipoyl synthase family. Requires [4Fe-4S] cluster as cofactor.

Its subcellular location is the cytoplasm. It catalyses the reaction [[Fe-S] cluster scaffold protein carrying a second [4Fe-4S](2+) cluster] + N(6)-octanoyl-L-lysyl-[protein] + 2 oxidized [2Fe-2S]-[ferredoxin] + 2 S-adenosyl-L-methionine + 4 H(+) = [[Fe-S] cluster scaffold protein] + N(6)-[(R)-dihydrolipoyl]-L-lysyl-[protein] + 4 Fe(3+) + 2 hydrogen sulfide + 2 5'-deoxyadenosine + 2 L-methionine + 2 reduced [2Fe-2S]-[ferredoxin]. The protein operates within protein modification; protein lipoylation via endogenous pathway; protein N(6)-(lipoyl)lysine from octanoyl-[acyl-carrier-protein]: step 2/2. Its function is as follows. Catalyzes the radical-mediated insertion of two sulfur atoms into the C-6 and C-8 positions of the octanoyl moiety bound to the lipoyl domains of lipoate-dependent enzymes, thereby converting the octanoylated domains into lipoylated derivatives. The sequence is that of Lipoyl synthase from Rickettsia typhi (strain ATCC VR-144 / Wilmington).